We begin with the raw amino-acid sequence, 536 residues long: Chaperonin GroEL (536 aa).

Residues 29–32 (TLGP), 86–90 (DGTTT), Gly-412, and Asp-493 contribute to the ATP site.

The protein belongs to the chaperonin (HSP60) family. As to quaternary structure, forms a cylinder of 14 subunits composed of two heptameric rings stacked back-to-back. Interacts with the co-chaperonin GroES.

Its subcellular location is the cytoplasm. The catalysed reaction is ATP + H2O + a folded polypeptide = ADP + phosphate + an unfolded polypeptide.. Its function is as follows. Together with its co-chaperonin GroES, plays an essential role in assisting protein folding. The GroEL-GroES system forms a nano-cage that allows encapsulation of the non-native substrate proteins and provides a physical environment optimized to promote and accelerate protein folding. This chain is Chaperonin GroEL, found in Aster yellows witches'-broom phytoplasma (strain AYWB).